Here is a 1400-residue protein sequence, read N- to C-terminus: MNQEVMNLFNPQAPAQTFDSIRISIASPEKILSWSYGEIKKPETINYRTFKPERDGLFCARIFGPIKDYECLCGKYKRMKYKGIICEKCGVEVTLSRVRRERMGHIELAAPVAHIWFLKSLPSRIGTLLDMTLKDIERVLYFENYIVTEPGLTSLKEHQLLSEEEYMIAVDEFGEDQFTALIGAEAIYELLASMELEKIAADLRVDLAETTSDLKQKKLMKRLKIVENFLESGNRPEWMIMKIVPVIPPDLRPLVPLDGGRFATSDLNDLYRRVINRNNRLKRLIELRAPGIIIRNEKRMLQEAVDALFDNGRRGRVITGANKRPLKSLSDMLKGKQGRFRQNLLGKRVDYSGRSVIVTGPELKLHQCGLPKKMALELFKPFIYARLDAKGYSSTVKQAKKLVEKERPEVWDILDEVIREHPVLLNRAPTLHRLGIQAFEPTLIEGKAIQLHPLVCTAFNADFDGDQMAVHVPLSLEAQLEARVLMMSTNNILHPANGAPIIVPSQDMVLGLYYLSIVAEKEPGEGMIFADMGELQHALENKVVTLHTKIKGRFKTVDAEGNPVSKIYDTTPGRMIMGELLPKNVNVPFDICNQEMTKKNISKMIDHVYRHCGQKETVIFCDRIMQLGFAHACRAGISFGKDDMVIPESKAKIVAETEALTTEYEQQYNDGLITQGEKYNKVVDAWGKATDKITEEMMARLKAVEFDPVTGRQKQMNSVYMMSHSGARGSVNQMRQLGGMRGLMAKPSGEIIETPIISNFKEGLTVNEYFNSTHGARKGLADTALKTANSGYLTRRLVDVAQDAIISEVDCGAEIGLTMQPIVDAGQIVASIGQRVLGRTALDPILHPVTGEVIVEAGRMIEEKDVEIIEKAGIQSIRIRSALTCETRDGVCAKCYGRDLARGTPVNQGEAVGVIAAQSIGEPGTQLTMRTFHLGGTAQVVDSSYLEASYEGTVKLRNRNVVRNSDGNLVVMGRNMAVLILDATGKERAVHRVTYGSRLFVDEGDTVKRGQRIAEWDPYTRPIMTEVEGYIEFEDLVDGLSVSETADESTGITKRVVIDWRSTPRGSDLKPAMVIKDKAGKILKLSKGGDARFLLSVESILSVEPGAHVKAGDVIARLPMESAKTKDITGGLPRVAELFEARRPKDHAIIAEIDGTVRFGRDYKNKRRIIIEPNDDTIEPVEYLIPKGKPFHLQDGDVIEKGEYILDGNPAPHDILAIKGVEALASYLVNEIQEVYRLQGVLINDKHIEVIVRQMLQKVEITESGDTGYIPGDHVDRIELEEINERLIEEGKKPGSGNPVLLGITKASLQTPSFISAASFQETTRVLTEAAVAGKMDTLQGLKENVIVGRLIPAGTGGMTNQIRRIATARDELIIDERRKTSGSAEANAMLVDMTNNAAE.

Residues Cys-71, Cys-73, Cys-86, and Cys-89 each coordinate Zn(2+). The Mg(2+) site is built by Asp-462, Asp-464, and Asp-466. Zn(2+) is bound by residues Cys-811, Cys-885, Cys-892, and Cys-895.

The protein belongs to the RNA polymerase beta' chain family. As to quaternary structure, the RNAP catalytic core consists of 2 alpha, 1 beta, 1 beta' and 1 omega subunit. When a sigma factor is associated with the core the holoenzyme is formed, which can initiate transcription. Mg(2+) serves as cofactor. Zn(2+) is required as a cofactor.

The catalysed reaction is RNA(n) + a ribonucleoside 5'-triphosphate = RNA(n+1) + diphosphate. Its function is as follows. DNA-dependent RNA polymerase catalyzes the transcription of DNA into RNA using the four ribonucleoside triphosphates as substrates. The protein is DNA-directed RNA polymerase subunit beta' of Brucella suis (strain ATCC 23445 / NCTC 10510).